The chain runs to 732 residues: Formin-homology and zinc finger domains protein 1 (732 aa).

Composition is skewed to low complexity over residues 1–12, 19–45, 121–137, and 240–251; these read MMLASSAPTAPS, QPSAATTRADDCSSSTSPTNTSASDAS, QQQQQQNQNPSQSQSSS, and SSPKSPTSPTQP. Residues 1–27 form the signal peptide; that stretch reads MMLASSAPTAPSLLPPSSQPSAATTRA. 3 disordered regions span residues 1-45, 121-141, and 232-267; these read MMLA…SDAS, QQQQQQNQNPSQSQSSSSDRK, and RGRPMQGRSSPKSPTSPTQPGRRGSQASSLPSRRNT. Polar residues predominate over residues 256–267; the sequence is SQASSLPSRRNT. Residues 355–732 form the FH2 domain; it reads PISLSSSIIP…DDHHINVSSP (378 aa).

Belongs to the formin homology family. Transiently expressed in all mesoderm derived progenitor body wall muscle cells before they differentiate.

In terms of biological role, acts redundantly with hlh-1 to promote body wall muscle cell and coelomocyte specification in postembryonic mesoderm progenitors, probably through suppression of sem-2. This is Formin-homology and zinc finger domains protein 1 from Caenorhabditis elegans.